A 660-amino-acid chain; its full sequence is DNA mismatch repair protein MutL (660 aa).

Residues 414 to 433 form a disordered region; the sequence is SSVKHASRPQNTFTETDHPN.

The protein belongs to the DNA mismatch repair MutL/HexB family.

Functionally, this protein is involved in the repair of mismatches in DNA. It is required for dam-dependent methyl-directed DNA mismatch repair. May act as a 'molecular matchmaker', a protein that promotes the formation of a stable complex between two or more DNA-binding proteins in an ATP-dependent manner without itself being part of a final effector complex. In Streptococcus pyogenes serotype M6 (strain ATCC BAA-946 / MGAS10394), this protein is DNA mismatch repair protein MutL.